The primary structure comprises 183 residues: Adenine phosphoribosyltransferase (183 aa).

It belongs to the purine/pyrimidine phosphoribosyltransferase family. In terms of assembly, homodimer.

It is found in the cytoplasm. The catalysed reaction is AMP + diphosphate = 5-phospho-alpha-D-ribose 1-diphosphate + adenine. Its pathway is purine metabolism; AMP biosynthesis via salvage pathway; AMP from adenine: step 1/1. In terms of biological role, catalyzes a salvage reaction resulting in the formation of AMP, that is energically less costly than de novo synthesis. This Photorhabdus laumondii subsp. laumondii (strain DSM 15139 / CIP 105565 / TT01) (Photorhabdus luminescens subsp. laumondii) protein is Adenine phosphoribosyltransferase.